Here is a 711-residue protein sequence, read N- to C-terminus: MAVYRLCVTTGPYLRAGTLDNISVTLVGTCGESPKQRLDRMGRDFAPGSVQKYKVRCTAELGELLLLRVHKERYAFFRKDSWYCSRICVTEPDGSVSHFPCYQWIEGYCTVELRPGTARTICQDSLPLLLDHRTRELRARQECYRWKIYAPGFPCMVDVNSFQEMESDKKFALTKTTTCVDQGDSSGNRYLPGFPMKIDIPSLMYMEPNVRYSATKTISLLFNAIPASLGMKLRGLLDRKGSWKKLDDMQNIFWCHKTFTTKYVTEHWCEDHFFGYQYLNGVNPVMLHCISSLPSKLPVTNDMVAPLLGQDTCLQTELERGNIFLADYWILAEAPTHCLNGRQQYVAAPLCLLWLSPQGALVPLAIQLSQTPGPDSPIFLPTDSEWDWLLAKTWVRNSEFLVHENNTHFLCTHLLCEAFAMATLRQLPLCHPIYKLLLPHTRYTLQVNTIARATLLNPEGLVDQVTSIGRQGLIYLMSTGLAHFTYTNFCLPDSLRARGVLAIPNYHYRDDGLKIWAAIESFVSEIVGYYYPSDASVQQDSELQAWTGEIFAQAFLGRESSGFPSRLCTPGEMVKFLTAIIFNCSAQHAAVNSGQHDFGAWMPNAPSSMRQPPPQTKGTTTLKTYLDTLPEVNISCNNLLLFWLVSQEPKDQRPLGTYPDEHFTEEAPRRSIAAFQSRLAQISRDIQERNQGLALPYTYLDPPLIENSVSI.

A PLAT domain is found at 2–119; the sequence is AVYRLCVTTG…TVELRPGTAR (118 aa). The region spanning 120 to 711 is the Lipoxygenase domain; it reads TICQDSLPLL…PPLIENSVSI (592 aa). The Fe cation site is built by His-408, His-413, His-588, Asn-592, and Ile-711.

This sequence belongs to the lipoxygenase family. The cofactor is Fe cation. As to expression, predominantly expressed in skin.

Its subcellular location is the cytoplasm. It catalyses the reaction a hydroperoxyeicosatetraenoate = a hydroxy-epoxy-eicosatetraenoate. The enzyme catalyses (12R)-hydroperoxy-(5Z,8Z,10E,14Z)-eicosatetraenoate = (8R)-hydroxy-(11R,12R)-epoxy-(5Z,9E,14Z)-eicosatrienoate. It carries out the reaction (12S)-hydroperoxy-(5Z,8Z,10E,14Z)-eicosatetraenoate = (8R)-hydroxy-(11S,12S)-epoxy-(5Z,9E,14Z)-eicosatrienoate. The catalysed reaction is (12S)-hydroperoxy-(5Z,8Z,10E,14Z)-eicosatetraenoate = (10R)-hydroxy-(11S,12S)-epoxy-(5Z,8Z,14Z)-eicosatrienoate. It catalyses the reaction (15S)-hydroperoxy-(5Z,8Z,11Z,13E)-eicosatetraenoate = (13R)-hydroxy-(14S,15S)-epoxy-(5Z,8Z,11Z)-eicosatrienoate. The enzyme catalyses (5S)-hydroperoxy-(6E,8Z,11Z,14Z)-eicosatetraenoate = 7R-hydroxy-5S,6S-epoxy-(8Z,11Z,14Z)-eicosatrienoate. It carries out the reaction (13S)-hydroperoxy-(9Z,11E)-octadecadienoate = 11-hydroxy-(12S,13S)-epoxy-(9Z)-octadecenoate. The catalysed reaction is N-[omega-(9R)-hydroperoxy-(10E,12Z)-octadecadienoyloxy]acyl-beta-D-glucosyl-(1&lt;-&gt;1)-octadecasphing-4E-enine = a N-[omega-(9R,10R)-epoxy-(13R)-hydroxy-(11E)-octadecenoyloxy]acyl-beta-D-glucosyl-(1&lt;-&gt;1)-sphing-4E-enine. It catalyses the reaction a N-[omega-(9R)-hydroperoxy-(10E,12Z)-octadecadienoyloxy]-acylsphin-4E-enine = a N-[omega-(9R,10R)-epoxy-(13R)-hydroxy-(11E)-octadecenoyloxy]-acylsphing-4E-enine. The enzyme catalyses a hydroperoxyeicosatetraenoate = an oxoeicosatetraenoate + H2O. It carries out the reaction (12R)-hydroperoxy-(5Z,8Z,10E,14Z)-eicosatetraenoate = 12-oxo-(5Z,8Z,10E,14Z)-eicosatetraenoate + H2O. The catalysed reaction is (12S)-hydroperoxy-(5Z,8Z,10E,14Z)-eicosatetraenoate = 12-oxo-(5Z,8Z,10E,14Z)-eicosatetraenoate + H2O. It catalyses the reaction (15S)-hydroperoxy-(5Z,8Z,11Z,13E)-eicosatetraenoate = 15-oxo-(5Z,8Z,11Z,13E)-eicosatetraenoate + H2O. The enzyme catalyses (13S)-hydroperoxy-(9Z,11E)-octadecadienoate = 13-oxo-(9Z,11E)-octadecadienoate + H2O. It carries out the reaction (8S)-hydroperoxy-(5Z,9E,11Z,14Z)-eicosatetraenoate = (10R)-hydroxy-(8S,9S)-epoxy-(5Z,11Z,14Z)-eicosatrienoate. The catalysed reaction is (8R)-hydroperoxy-(5Z,9E,11Z,14Z)-eicosatetraenoate = 8-oxo-(5Z,9E,11Z,14Z)-eicosatetraenoate + H2O. It catalyses the reaction (8S)-hydroperoxy-(5Z,9E,11Z,14Z)-eicosatetraenoate = 8-oxo-(5Z,9E,11Z,14Z)-eicosatetraenoate + H2O. It participates in lipid metabolism; hydroperoxy eicosatetraenoic acid biosynthesis. The protein operates within lipid metabolism; sphingolipid metabolism. Lipoxygenase activity is activated by 13(S)-HPODE leading to an active free ferric enzyme. The lipoxygenase and hydroperoxide isomerase activities are in competition and are reciprocally regulated by oxygen. The oxygen reacts with an epoxyallylic radical intermediate leading to an epoxyallylic peroxyl radical, which, due to its limited reactivity within the enzyme active site, it dissociates and leaves the enzyme in the activated free ferric state. In terms of biological role, non-heme iron-containing lipoxygenase which is atypical in that it displays a prominent hydroperoxide isomerase activity and a reduced lipoxygenases activity. The hydroperoxide isomerase activity catalyzes the isomerization of hydroperoxides, derived from arachidonic and linoleic acid by ALOX12B, into hepoxilin-type epoxyalcohols and ketones. In presence of oxygen, oxygenates polyunsaturated fatty acids, including arachidonic acid, to produce fatty acid hydroperoxides. In the skin, acts downstream of ALOX12B on the linoleate moiety of esterified omega-hydroxyacyl-sphingosine (EOS) ceramides to produce an epoxy-ketone derivative, a crucial step in the conjugation of omega-hydroxyceramide to membrane proteins. Therefore plays a crucial role in the synthesis of corneocytes lipid envelope and the establishment of the skin barrier to water loss. In parallel, it may have a signaling function in barrier formation through the production of hepoxilins metabolites. Also plays a role in adipocyte differentiation through hepoxilin A3 and hepoxilin B3 production which in turn activate PPARG. Through the production of hepoxilins in the spinal cord, it may regulate inflammatory tactile allodynia. The chain is Hydroperoxide isomerase ALOXE3 from Homo sapiens (Human).